The following is a 520-amino-acid chain: Hydroxymethylglutaryl-CoA synthase, cytoplasmic (520 aa).

S4 bears the Phosphoserine mark. (3S)-3-hydroxy-3-methylglutaryl-CoA contacts are provided by D43 and A44. CoA is bound at residue 44 to 46 (AGK). The residue at position 46 (K46) is an N6-acetyllysine. E95 serves as the catalytic Proton donor/acceptor. C129, N167, T171, S221, and H264 together coordinate (3S)-3-hydroxy-3-methylglutaryl-CoA. C129 serves as the catalytic Acyl-thioester intermediate. CoA is bound at residue N167. Position 221 (S221) interacts with CoA. The Proton donor/acceptor role is filled by H264. CoA-binding residues include K269 and K273. Positions 273, 343, and 377 each coordinate (3S)-3-hydroxy-3-methylglutaryl-CoA. Position 273 is an N6-acetyllysine (K273). The segment at 486–520 (SNTATEHIPSPAKKVPRLPATAAESESAVISNGEH) is disordered. Phosphoserine occurs at positions 495 and 516.

This sequence belongs to the thiolase-like superfamily. HMG-CoA synthase family. Homodimer.

The protein localises to the cytoplasm. It catalyses the reaction acetoacetyl-CoA + acetyl-CoA + H2O = (3S)-3-hydroxy-3-methylglutaryl-CoA + CoA + H(+). The protein operates within metabolic intermediate biosynthesis; (R)-mevalonate biosynthesis; (R)-mevalonate from acetyl-CoA: step 2/3. This enzyme condenses acetyl-CoA with acetoacetyl-CoA to form HMG-CoA, which is converted by HMG-CoA reductase (HMGCR) into mevalonate, a precursor for cholesterol synthesis. This Cricetulus griseus (Chinese hamster) protein is Hydroxymethylglutaryl-CoA synthase, cytoplasmic.